The following is a 180-amino-acid chain: ATP synthase subunit delta (180 aa).

This sequence belongs to the ATPase delta chain family. F-type ATPases have 2 components, F(1) - the catalytic core - and F(0) - the membrane proton channel. F(1) has five subunits: alpha(3), beta(3), gamma(1), delta(1), epsilon(1). F(0) has three main subunits: a(1), b(2) and c(10-14). The alpha and beta chains form an alternating ring which encloses part of the gamma chain. F(1) is attached to F(0) by a central stalk formed by the gamma and epsilon chains, while a peripheral stalk is formed by the delta and b chains.

It is found in the cell membrane. Its function is as follows. F(1)F(0) ATP synthase produces ATP from ADP in the presence of a proton or sodium gradient. F-type ATPases consist of two structural domains, F(1) containing the extramembraneous catalytic core and F(0) containing the membrane proton channel, linked together by a central stalk and a peripheral stalk. During catalysis, ATP synthesis in the catalytic domain of F(1) is coupled via a rotary mechanism of the central stalk subunits to proton translocation. This protein is part of the stalk that links CF(0) to CF(1). It either transmits conformational changes from CF(0) to CF(1) or is implicated in proton conduction. The sequence is that of ATP synthase subunit delta from Bacillus cereus (strain 03BB102).